The chain runs to 512 residues: MALSQMATGLLLASTIFCLILWVVKAWQPRLPKGLKSPPGPWGWPLLGNVLTLGKSPHLALSRLSQRYGDVLQIRIGSTPVLVLSGLDTIRQALVRQGDDFKGRPDLYSLSLITDSQSMSFSPDSGPVWAAGRRLAQNALNTFSIASDPASSCSCYLEEHVSKEAEALLSRLQEQMAEVGRFDPYNQVLLSVANVIGAMCFGHHFSQRSEEMLPLLMSSSDFVETVSSGNPLDFFPILQYMPNSALQRFKNFNQTFVQSLQKIVQEHYQDFDERSVQDITGALLKHNEKSSRASDGHIPQEKIVNLINDIFGAGFDTVTTAISWSLMYLVANPEIQRQIQKELDTVIGRARQPRLSDRPQLPLMEAFILEIFRHTSFVPFTIPHSTTKDTTLKGFYIPKECCVFINQWQVNHDQQVWGDPFAFRPERFLTADGTTINKTLSEKVMLFGMGKRRCIGEVLAKWEIFLFLAILLQRLEFSVPAGVKVDLTPIYGLTMKHTRCEHVQARPRFSIK.

Residue Ser-65 is glycosylated (O-linked (GlcNAc) serine). Phe-222 serves as a coordination point for substrate. Heme is bound at residue Cys-454.

This sequence belongs to the cytochrome P450 family. As to quaternary structure, interacts with PGRMC1; the interaction requires PGRMC1 homodimerization. Requires heme as cofactor. In terms of tissue distribution, constitutively expressed in liver.

The protein localises to the endoplasmic reticulum membrane. The protein resides in the microsome membrane. The enzyme catalyses an organic molecule + reduced [NADPH--hemoprotein reductase] + O2 = an alcohol + oxidized [NADPH--hemoprotein reductase] + H2O + H(+). It catalyses the reaction 17beta-estradiol + reduced [NADPH--hemoprotein reductase] + O2 = 2-hydroxy-17beta-estradiol + oxidized [NADPH--hemoprotein reductase] + H2O + H(+). The catalysed reaction is 17beta-estradiol + reduced [NADPH--hemoprotein reductase] + O2 = 4-hydroxy-17beta-estradiol + oxidized [NADPH--hemoprotein reductase] + H2O + H(+). It carries out the reaction estrone + reduced [NADPH--hemoprotein reductase] + O2 = 2-hydroxyestrone + oxidized [NADPH--hemoprotein reductase] + H2O + H(+). The enzyme catalyses estrone + reduced [NADPH--hemoprotein reductase] + O2 = 4-hydroxyestrone + oxidized [NADPH--hemoprotein reductase] + H2O + H(+). It catalyses the reaction cholesterol + reduced [NADPH--hemoprotein reductase] + O2 = 25-hydroxycholesterol + oxidized [NADPH--hemoprotein reductase] + H2O + H(+). The catalysed reaction is all-trans-retinol + reduced [NADPH--hemoprotein reductase] + O2 = all-trans-retinal + oxidized [NADPH--hemoprotein reductase] + 2 H2O + H(+). It carries out the reaction all-trans-retinal + reduced [NADPH--hemoprotein reductase] + O2 = all-trans-retinoate + oxidized [NADPH--hemoprotein reductase] + H2O + 2 H(+). The enzyme catalyses (5Z,8Z,11Z,14Z)-eicosatetraenoate + reduced [NADPH--hemoprotein reductase] + O2 = (14R,15S)-epoxy-(5Z,8Z,11Z)-eicosatrienoate + oxidized [NADPH--hemoprotein reductase] + H2O + H(+). It catalyses the reaction (5Z,8Z,11Z,14Z)-eicosatetraenoate + reduced [NADPH--hemoprotein reductase] + O2 = (14S,15R)-epoxy-(5Z,8Z,11Z)-eicosatrienoate + oxidized [NADPH--hemoprotein reductase] + H2O + H(+). The catalysed reaction is (5Z,8Z,11Z,14Z,17Z)-eicosapentaenoate + reduced [NADPH--hemoprotein reductase] + O2 = (17R,18S)-epoxy-(5Z,8Z,11Z,14Z)-eicosatetraenoate + oxidized [NADPH--hemoprotein reductase] + H2O + H(+). It carries out the reaction (4Z,7Z,10Z,13Z,16Z,19Z)-docosahexaenoate + reduced [NADPH--hemoprotein reductase] + O2 = (19R,20S)-epoxy-(4Z,7Z,10Z,13Z,16Z)-docosapentaenoate + oxidized [NADPH--hemoprotein reductase] + H2O + H(+). The enzyme catalyses (5S)-hydroperoxy-(6E,8Z,11Z,14Z)-eicosatetraenoate = 5-oxo-(6E,8Z,11Z,14Z)-eicosatetraenoate + H2O. It catalyses the reaction (12S)-hydroperoxy-(5Z,8Z,10E,14Z)-eicosatetraenoate = 12-oxo-(5Z,8Z,10E,14Z)-eicosatetraenoate + H2O. The catalysed reaction is (15S)-hydroperoxy-(5Z,8Z,11Z,13E)-eicosatetraenoate = 15-oxo-(5Z,8Z,11Z,13E)-eicosatetraenoate + H2O. It carries out the reaction (13S)-hydroperoxy-(9Z,11E)-octadecadienoate = 13-oxo-(9Z,11E)-octadecadienoate + H2O. The enzyme catalyses (5Z,8Z,11Z,14Z)-eicosatetraenoate + reduced [NADPH--hemoprotein reductase] + O2 = 13-hydroxy-(5Z,8Z,11Z,14Z)-eicosatetraenoate + oxidized [NADPH--hemoprotein reductase] + H2O + H(+). It catalyses the reaction (5Z,8Z,11Z,14Z)-eicosatetraenoate + reduced [NADPH--hemoprotein reductase] + O2 = 19-hydroxy-(5Z,8Z,11Z,14Z)-eicosatetraenoate + oxidized [NADPH--hemoprotein reductase] + H2O + H(+). The catalysed reaction is (9Z,12Z)-octadecadienoate + reduced [NADPH--hemoprotein reductase] + O2 = 11-hydroxy-(9Z,12Z)-octadecadienoate + oxidized [NADPH--hemoprotein reductase] + H2O + H(+). It participates in cofactor metabolism; retinol metabolism. The protein operates within steroid metabolism; cholesterol metabolism. It functions in the pathway lipid metabolism; arachidonate metabolism. A cytochrome P450 monooxygenase involved in the metabolism of various endogenous substrates, including fatty acids, steroid hormones and vitamins. Mechanistically, uses molecular oxygen inserting one oxygen atom into a substrate, and reducing the second into a water molecule, with two electrons provided by NADPH via cytochrome P450 reductase (NADPH--hemoprotein reductase). Catalyzes the hydroxylation of carbon-hydrogen bonds. Exhibits high catalytic activity for the formation of hydroxyestrogens from estrone (E1) and 17beta-estradiol (E2), namely 2-hydroxy E1 and E2. Metabolizes cholesterol toward 25-hydroxycholesterol, a physiological regulator of cellular cholesterol homeostasis. May act as a major enzyme for all-trans retinoic acid biosynthesis in the liver. Catalyzes two successive oxidative transformation of all-trans retinol to all-trans retinal and then to the active form all-trans retinoic acid. Primarily catalyzes stereoselective epoxidation of the last double bond of polyunsaturated fatty acids (PUFA), displaying a strong preference for the (R,S) stereoisomer. Catalyzes bisallylic hydroxylation and omega-1 hydroxylation of PUFA. May also participate in eicosanoids metabolism by converting hydroperoxide species into oxo metabolites (lipoxygenase-like reaction, NADPH-independent). Plays a role in the oxidative metabolism of xenobiotics. Catalyzes the N-hydroxylation of heterocyclic amines and the O-deethylation of phenacetin. Metabolizes caffeine via N3-demethylation. In Canis lupus familiaris (Dog), this protein is Cytochrome P450 1A2 (CYP1A2).